A 427-amino-acid polypeptide reads, in one-letter code: A-adding tRNA nucleotidyltransferase (427 aa).

49–52 (GTVR) serves as a coordination point for ATP. Mg(2+) is bound by residues D62 and D64. ATP is bound by residues 136 to 137 (RD), N141, 181 to 190 (DPTRLLRGVR), R194, and R225.

Belongs to the tRNA nucleotidyltransferase/poly(A) polymerase family. The cofactor is Mg(2+).

It catalyses the reaction a tRNA with a 3' CC end + ATP = a tRNA with a 3' CCA end + diphosphate. Functionally, tRNA nucleotidyltransferase involved in the synthesis of the tRNA CCA terminus. Adds the terminal adenosine residue to tRNA. This is A-adding tRNA nucleotidyltransferase from Halalkalibacterium halodurans (strain ATCC BAA-125 / DSM 18197 / FERM 7344 / JCM 9153 / C-125) (Bacillus halodurans).